A 689-amino-acid chain; its full sequence is Glycine--tRNA ligase beta subunit (689 aa).

It belongs to the class-II aminoacyl-tRNA synthetase family. Tetramer of two alpha and two beta subunits.

The protein localises to the cytoplasm. The catalysed reaction is tRNA(Gly) + glycine + ATP = glycyl-tRNA(Gly) + AMP + diphosphate. The protein is Glycine--tRNA ligase beta subunit of Salmonella arizonae (strain ATCC BAA-731 / CDC346-86 / RSK2980).